Consider the following 394-residue polypeptide: Protein TsgA homolog (394 aa).

Helical transmembrane passes span 11 to 31 (WISY…GMVM), 51 to 71 (FLNA…EIIP), 76 to 96 (LMFG…GKSL), 101 to 121 (LCMF…TFLI), 134 to 154 (LLFT…VAAM), 162 to 182 (WYWV…LTLF), 206 to 226 (IGVL…LGFI), 251 to 271 (FWTS…FFDL), 274 to 294 (IVTI…STDN), 302 to 322 (IMAL…LGSL), 334 to 354 (FILT…GPIV), and 363 to 383 (LTTA…LGFV).

This sequence belongs to the major facilitator superfamily. TsgA family.

It is found in the cell inner membrane. This Serratia proteamaculans (strain 568) protein is Protein TsgA homolog.